Reading from the N-terminus, the 819-residue chain is Disintegrin and metalloproteinase domain-containing protein 9 (819 aa).

The N-terminal stretch at 1 to 28 is a signal peptide; the sequence is MGSGARFPSGTLRVRWLLLLGLVGPVLG. At 29 to 697 the chain is on the extracellular side; sequence AARPGFQQTS…YNEMNTALRD (669 aa). Residues Asn125, Asn144, Asn154, and Asn231 are each glycosylated (N-linked (GlcNAc...) asparagine). Residues 212-406 enclose the Peptidase M12B domain; the sequence is RYVELFIVVD…KGGNCLLNIP (195 aa). 7 cysteine pairs are disulfide-bonded: Cys322–Cys401, Cys363–Cys385, Cys365–Cys370, Cys473–Cys493, Cys644–Cys656, Cys650–Cys662, and Cys664–Cys673. Residue His347 coordinates Zn(2+). Glu348 is a catalytic residue. His351 and His357 together coordinate Zn(2+). N-linked (GlcNAc...) asparagine glycans are attached at residues Asn381 and Asn487. In terms of domain architecture, Disintegrin spans 414–501; it reads APSCGNKLVD…FCQPDVFIQN (88 aa). The EGF-like domain occupies 644 to 698; it reads CDVQKKCHGHGVCNSNKNCHCENGWAPPNCETKGYGGSVDSGPTYNEMNTALRDG. Residues 698–718 form a helical membrane-spanning segment; the sequence is GLLVFFFLIVPLIVCAIFIFI. Residues 719 to 819 are Cytoplasmic-facing; sequence KRDQLWRSYF…PAPPLYSSLT (101 aa). 2 disordered regions span residues 734–763 and 780–819; these read QTYE…VTPP and AKQP…SSLT. The span at 735–750 shows a compositional bias: polar residues; sequence TYESDGKNQANPSRQP. Phosphoserine is present on Ser758. Residue Thr761 is modified to Phosphothreonine.

As to quaternary structure, interacts with SH3GL2 and SNX9 through its cytoplasmic tail. Interacts with ITGA6. Zn(2+) serves as cofactor. Post-translationally, proteolytically cleaved in the trans-Golgi network before it reaches the plasma membrane to generate a mature protein. The removal of the pro-domain occurs via cleavage at two different sites. Processed most likely by a pro-protein convertase such as furin, at the boundary between the pro-domain and the catalytic domain. An additional upstream cleavage pro-protein convertase site (Arg-56/Glu-57) has an important role in the activation of ADAM9. In terms of processing, phosphorylation is induced in vitro by phorbol-12-myristate-13-acetate (PMA). Widely expressed. Expressed in chondrocytes. Isoform 2 is highly expressed in liver and heart.

The protein resides in the cell membrane. Its subcellular location is the secreted. With respect to regulation, synthesized as an inactive form which is proteolytically cleaved to generate an active enzyme. Processing at the upstream site is particularly important for activation of the proenzyme, whereas processing at the boundary between the pro-domain and the catalytic domain does not appear to be essential. Inhibited by hydroxamic acid-based inhibitors. Functionally, metalloprotease that cleaves and releases a number of molecules with important roles in tumorigenesis and angiogenesis, such as TEK, KDR, EPHB4, CD40, VCAM1 and CDH5. May mediate cell-cell, cell-matrix interactions and regulate the motility of cells via interactions with integrins. In terms of biological role, may act as alpha-secretase for amyloid precursor protein (APP). This chain is Disintegrin and metalloproteinase domain-containing protein 9 (ADAM9), found in Homo sapiens (Human).